A 734-amino-acid polypeptide reads, in one-letter code: Homoaconitase, mitochondrial (734 aa).

The N-terminal 25 residues, 1 to 25, are a transit peptide targeting the mitochondrion; that stretch reads MGASNLLRFGAVTRISTPLLSRRSL. Positions 367, 427, and 430 each coordinate [4Fe-4S] cluster.

Belongs to the aconitase/IPM isomerase family. [4Fe-4S] cluster serves as cofactor.

Its subcellular location is the mitochondrion. The catalysed reaction is (2R,3S)-homoisocitrate = cis-homoaconitate + H2O. The protein operates within amino-acid biosynthesis; L-lysine biosynthesis via AAA pathway; L-alpha-aminoadipate from 2-oxoglutarate: step 3/5. Functionally, catalyzes the reversible hydration of cis-homoaconitate to (2R,3S)-homoisocitrate, a step in the alpha-aminoadipate pathway for lysine biosynthesis. This Mycosarcoma maydis (Corn smut fungus) protein is Homoaconitase, mitochondrial (LYS4).